A 146-amino-acid chain; its full sequence is NADH-ubiquinone oxidoreductase chain 6 (146 aa).

4 helical membrane-spanning segments follow: residues 10–30, 43–63, 81–101, and 124–144; these read ILAI…LLFV, LMGI…FLFI, VIVL…PIAI, and APML…AIAM.

It belongs to the complex I subunit 6 family.

It localises to the mitochondrion membrane. It carries out the reaction a ubiquinone + NADH + 5 H(+)(in) = a ubiquinol + NAD(+) + 4 H(+)(out). In terms of biological role, core subunit of the mitochondrial membrane respiratory chain NADH dehydrogenase (Complex I) that is believed to belong to the minimal assembly required for catalysis. Complex I functions in the transfer of electrons from NADH to the respiratory chain. The immediate electron acceptor for the enzyme is believed to be ubiquinone. The chain is NADH-ubiquinone oxidoreductase chain 6 (NAD6) from Candida albicans (strain SC5314 / ATCC MYA-2876) (Yeast).